The following is a 129-amino-acid chain: 3-aminoacrylate deaminase RutC (129 aa).

This sequence belongs to the RutC family.

The catalysed reaction is (Z)-3-aminoacrylate + H2O + H(+) = 3-oxopropanoate + NH4(+). In terms of biological role, involved in pyrimidine catabolism. Catalyzes the deamination of 3-aminoacrylate to malonic semialdehyde, a reaction that can also occur spontaneously. RutC may facilitate the reaction and modulate the metabolic fitness, rather than catalyzing essential functions. This Caulobacter sp. (strain K31) protein is 3-aminoacrylate deaminase RutC.